Reading from the N-terminus, the 424-residue chain is UDP-N-acetylglucosamine 1-carboxyvinyltransferase (424 aa).

Phosphoenolpyruvate is bound at residue 22–23 (KN). R95 provides a ligand contact to UDP-N-acetyl-alpha-D-glucosamine. C119 (proton donor) is an active-site residue. Residue C119 is modified to 2-(S-cysteinyl)pyruvic acid O-phosphothioketal. Residues 124–128 (RPVDQ), D311, and I333 each bind UDP-N-acetyl-alpha-D-glucosamine.

The protein belongs to the EPSP synthase family. MurA subfamily.

The protein localises to the cytoplasm. It carries out the reaction phosphoenolpyruvate + UDP-N-acetyl-alpha-D-glucosamine = UDP-N-acetyl-3-O-(1-carboxyvinyl)-alpha-D-glucosamine + phosphate. Its pathway is cell wall biogenesis; peptidoglycan biosynthesis. In terms of biological role, cell wall formation. Adds enolpyruvyl to UDP-N-acetylglucosamine. The sequence is that of UDP-N-acetylglucosamine 1-carboxyvinyltransferase from Polaromonas sp. (strain JS666 / ATCC BAA-500).